The chain runs to 155 residues: Ribosomal RNA large subunit methyltransferase H (155 aa).

S-adenosyl-L-methionine-binding positions include leucine 72, glycine 103, and leucine 122–leucine 127.

This sequence belongs to the RNA methyltransferase RlmH family. Homodimer.

It localises to the cytoplasm. It catalyses the reaction pseudouridine(1915) in 23S rRNA + S-adenosyl-L-methionine = N(3)-methylpseudouridine(1915) in 23S rRNA + S-adenosyl-L-homocysteine + H(+). In terms of biological role, specifically methylates the pseudouridine at position 1915 (m3Psi1915) in 23S rRNA. The sequence is that of Ribosomal RNA large subunit methyltransferase H from Haemophilus influenzae (strain PittEE).